The primary structure comprises 229 residues: Potassium/proton antiporter CemA (229 aa).

3 helical membrane-spanning segments follow: residues 7–27, 107–127, and 189–209; these read FTPL…SLLF, ILHF…SIFG, and IISG…KYWI.

This sequence belongs to the CemA family.

Its subcellular location is the plastid. The protein localises to the chloroplast inner membrane. It carries out the reaction K(+)(in) + H(+)(out) = K(+)(out) + H(+)(in). In terms of biological role, contributes to K(+)/H(+) antiport activity by supporting proton efflux to control proton extrusion and homeostasis in chloroplasts in a light-dependent manner to modulate photosynthesis. Prevents excessive induction of non-photochemical quenching (NPQ) under continuous-light conditions. Indirectly promotes efficient inorganic carbon uptake into chloroplasts. This Guizotia abyssinica (Niger) protein is Potassium/proton antiporter CemA.